We begin with the raw amino-acid sequence, 617 residues long: Electron transfer flavoprotein-ubiquinone oxidoreductase, mitochondrial (617 aa).

Residues 1 to 33 (MQVLLARLACPVYQCFHAIKIKKNYLPLCATRW) constitute a mitochondrion transit peptide. Residue 71 to 85 (VVIVGAGPAGLSAAA) coordinates FAD. At K96 the chain carries N6-acetyllysine. The stretch at 109 to 130 (IGAHTLSGACLDPRALQELFPD) is an intramembrane region. N6-acetyllysine occurs at positions 132 and 223. A ubiquinone-binding residues include G305 and G306. K357 carries the post-translational modification N6-acetyllysine. The stretch at 428-447 (IGLDVTEYEDNLKKSWVWKE) is an intramembrane region. S551 carries the phosphoserine modification. Residues C561, C586, C589, and C592 each coordinate [4Fe-4S] cluster. Residues 577–606 (FRLQINAQNCVHCKTCDIKDPSQNINWVVP) form the 4Fe-4S ferredoxin-type domain.

Belongs to the ETF-QO/FixC family. In terms of assembly, monomer. It depends on [4Fe-4S] cluster as a cofactor. FAD serves as cofactor.

Its subcellular location is the mitochondrion inner membrane. It carries out the reaction a ubiquinone + reduced [electron-transfer flavoprotein] = a ubiquinol + oxidized [electron-transfer flavoprotein] + H(+). Accepts electrons from ETF and reduces ubiquinone. In Bos taurus (Bovine), this protein is Electron transfer flavoprotein-ubiquinone oxidoreductase, mitochondrial (ETFDH).